The following is a 277-amino-acid chain: Energy-coupling factor transporter ATP-binding protein EcfA (277 aa).

Positions 4 to 238 (LETRDLTHIY…PELLTQTRLD (235 aa)) constitute an ABC transporter domain. Position 37–44 (37–44 (GPNGAGKS)) interacts with ATP.

It belongs to the ABC transporter superfamily. Energy-coupling factor EcfA family. In terms of assembly, forms a stable energy-coupling factor (ECF) transporter complex composed of 2 membrane-embedded substrate-binding proteins (S component), 2 ATP-binding proteins (A component) and 2 transmembrane proteins (T component).

Its subcellular location is the cell membrane. ATP-binding (A) component of a common energy-coupling factor (ECF) ABC-transporter complex. Unlike classic ABC transporters this ECF transporter provides the energy necessary to transport a number of different substrates. In Methanoculleus marisnigri (strain ATCC 35101 / DSM 1498 / JR1), this protein is Energy-coupling factor transporter ATP-binding protein EcfA.